The following is a 430-amino-acid chain: Adenylosuccinate synthetase (430 aa).

GTP contacts are provided by residues 13 to 19 (GDEGKGK) and 41 to 43 (GHT). Asp-14 functions as the Proton acceptor in the catalytic mechanism. Positions 14 and 41 each coordinate Mg(2+). Residues 14-17 (DEGK), 39-42 (NAGH), Thr-130, Arg-144, Gln-225, Thr-240, and Arg-304 contribute to the IMP site. Catalysis depends on His-42, which acts as the Proton donor. Position 300 to 306 (300 to 306 (STTGRKR)) interacts with substrate. Residues Arg-306, 332–334 (KLD), and 414–416 (STG) each bind GTP.

It belongs to the adenylosuccinate synthetase family. Homodimer. It depends on Mg(2+) as a cofactor.

It is found in the cytoplasm. It catalyses the reaction IMP + L-aspartate + GTP = N(6)-(1,2-dicarboxyethyl)-AMP + GDP + phosphate + 2 H(+). The protein operates within purine metabolism; AMP biosynthesis via de novo pathway; AMP from IMP: step 1/2. In terms of biological role, plays an important role in the de novo pathway of purine nucleotide biosynthesis. Catalyzes the first committed step in the biosynthesis of AMP from IMP. The protein is Adenylosuccinate synthetase of Buchnera aphidicola subsp. Schizaphis graminum (strain Sg).